Reading from the N-terminus, the 496-residue chain is Glycine receptor subunit beta (496 aa).

A signal peptide spans 1 to 22 (MKFSLAVSFFILMSLLFEDACS). Topologically, residues 23–268 (KEKSSKKGKG…IFTLRRQVGF (246 aa)) are extracellular. N-linked (GlcNAc...) asparagine glycosylation is present at Asn54. Glycine contacts are provided by Arg108 and Ser174. The cysteines at positions 183 and 197 are disulfide-linked. Asn242 carries an N-linked (GlcNAc...) asparagine glycan. A disulfide bridge connects residues Cys243 and Cys255. Residue Thr250 participates in glycine binding. Residues 269-289 (YMMGVYAPTLLIVVLSWLSFW) traverse the membrane as a helical segment. Over 290-294 (INPDA) the chain is Cytoplasmic. A helical transmembrane segment spans residues 295–315 (SAARVPLGIFSVLSLASECTT). At 316 to 327 (LAAELPKVSYVK) the chain is on the extracellular side. The chain crosses the membrane as a helical span at residues 328 to 349 (ALDVWLIACLLFGFASLVEYAV). The Cytoplasmic portion of the chain corresponds to 350 to 471 (VQVMLNNPKR…KPVIPTAAKR (122 aa)). Position 391 is a phosphothreonine (Thr391). A helical membrane pass occupies residues 472-495 (IDLYARALFPFCFLFFNVIYWSIY). Leu496 is a topological domain (extracellular).

This sequence belongs to the ligand-gated ion channel (TC 1.A.9) family. Glycine receptor (TC 1.A.9.3) subfamily. GLRB sub-subfamily. Forms heteropentamers with glycin receptor alpha subunits. Heteropentamers with GLRA1 can be composed of two GLRA1 and three GLRB subunits, or three GLRA1 and two GLRB subunits, or four GLRA1 subunits and one GLRB subunit. Forms heteropentamers with GLRA2. Functional GLRB-GLRA2 heteropentamers contain four GLRA2 subunits and one GLRB subunit, although alternative subunit composition cannot be excluded. Forms a heteropentamer with GLRA3. Interacts with GPHN. As to expression, detected in spinal cord and brain stem (at protein level). Detected in spinal cord, cerebellum and brain cortex.

It is found in the postsynaptic cell membrane. Its subcellular location is the cell membrane. The protein localises to the synapse. It localises to the perikaryon. The protein resides in the cell projection. It is found in the dendrite. Its subcellular location is the cytoplasm. It catalyses the reaction chloride(in) = chloride(out). With respect to regulation, channel opening is triggered by extracellular glycine. Heteropentameric channels composed of GLRB and GLRA1 are activated by lower glycine levels than homopentameric GLRA1. Functionally, subunit of heteromeric glycine-gated chloride channels. Plays an important role in the down-regulation of neuronal excitability. Contributes to the generation of inhibitory postsynaptic currents. The polypeptide is Glycine receptor subunit beta (Glrb) (Rattus norvegicus (Rat)).